The chain runs to 422 residues: 5-hydroxytryptamine receptor 1A (422 aa).

The interval 1-23 is disordered; the sequence is MDVLSPGQGNNTTSPPAPFETGG. Residues 1–38 lie on the Extracellular side of the membrane; that stretch reads MDVLSPGQGNNTTSPPAPFETGGNTTGISDVTVSYQVI. Residues Asn-10, Asn-11, and Asn-24 are each glycosylated (N-linked (GlcNAc...) asparagine). Residues 39–59 traverse the membrane as a helical segment; the sequence is TSLLLGTLIFCAVLGNACVVA. Residues 60-73 lie on the Cytoplasmic side of the membrane; that stretch reads AIALERSLQNVANY. The chain crosses the membrane as a helical span at residues 74–98; the sequence is LIGSLAVTDLMVSVLVLPMAALYQV. Topologically, residues 99-107 are extracellular; that stretch reads LNKWTLGQV. Residues 108–132 traverse the membrane as a helical segment; the sequence is TCDLFIALDVLCCTSSILHLCAIAL. The cysteines at positions 109 and 187 are disulfide-linked. Residues Asp-116 and Cys-120 each coordinate serotonin. Residues 133-135 carry the DRY motif; important for ligand-induced conformation changes motif; it reads DRY. The Cytoplasmic segment spans residues 133–152; it reads DRYWAITDPIDYVNKRTPRR. A helical transmembrane segment spans residues 153–174; it reads AAALISLTWLIGFLISIPPMLG. Topologically, residues 175 to 193 are extracellular; that stretch reads WRTPEDRSDPDACTISKDH. A helical membrane pass occupies residues 194 to 216; the sequence is GYTIYSTFGAFYIPLLLMLVLYG. Residues 217–346 are Cytoplasmic-facing; the sequence is RIFRAARFRI…LARERKTVKT (130 aa). The tract at residues 235–262 is disordered; sequence KTGADTRHGASPAPQPKKSVNGESGSRN. Thr-314, Lys-345, Thr-346, and Gly-352 together coordinate 1D-myo-inositol 4-phosphate. A helical membrane pass occupies residues 347 to 370; that stretch reads LGIIMGTFILCWLPFFIVALVLPF. Over 371–378 the chain is Extracellular; it reads CESSCHMP. A helical membrane pass occupies residues 379–403; it reads TLLGAIINWLGYSNSLLNPVIYAYF. Residues 396 to 400 carry the NPxxY motif; important for ligand-induced conformation changes and signaling motif; that stretch reads NPVIY. Residues Phe-403, Asn-404, and Lys-405 each contribute to the 1D-myo-inositol 4-phosphate site. Topologically, residues 404–422 are cytoplasmic; it reads NKDFQNAFKKIIKCKFCRQ.

This sequence belongs to the G-protein coupled receptor 1 family. 5-hydroxytryptamine receptor subfamily. HTR1A sub-subfamily. As to quaternary structure, heterodimer; heterodimerizes with GPER1. Interacts with YIF1B. Interacts with GPR39 and GALR1. Detected in lymph nodes, thymus and spleen. Detected in activated T-cells, but not in resting T-cells.

The protein localises to the cell membrane. The protein resides in the cell projection. It localises to the dendrite. G-protein coupled receptor activity is regulated by lipids: phosphatidylinositol 4-phosphate increases HTR1A-mediated activity. Binding to aripiprazol drug is regulated by cholesterol, which shapes the ligand-binding pocket, determining the specificity for aripiprazol. Activated by IHCH-7179 small molecule: IHCH-7179 acts both as an agonist activator for HTR1A and as an antagonist inhibitor for HTR2A. Activated by SEP-363856 small molecule: IHCH-7179 acts both as an agonist activator for HTR1A and TAAR1. Its function is as follows. G-protein coupled receptor for 5-hydroxytryptamine (serotonin). Also functions as a receptor for various drugs and psychoactive substances. Ligand binding causes a conformation change that triggers signaling via guanine nucleotide-binding proteins (G proteins) and modulates the activity of downstream effectors, such as adenylate cyclase. HTR1A is coupled to G(i)/G(o) G alpha proteins and mediates inhibitory neurotransmission: signaling inhibits adenylate cyclase activity and activates a phosphatidylinositol-calcium second messenger system that regulates the release of Ca(2+) ions from intracellular stores. Beta-arrestin family members regulate signaling by mediating both receptor desensitization and resensitization processes. Plays a role in the regulation of 5-hydroxytryptamine release and in the regulation of dopamine and 5-hydroxytryptamine metabolism. Plays a role in the regulation of dopamine and 5-hydroxytryptamine levels in the brain, and thereby affects neural activity, mood and behavior. Plays a role in the response to anxiogenic stimuli. The chain is 5-hydroxytryptamine receptor 1A from Homo sapiens (Human).